Reading from the N-terminus, the 132-residue chain is MEVNRMNKTGIAHIYASQNNTIIHVTDPTGAETIAMVSGGMVVKNDRDQASPYAAMKAADMVSETLKEHEITDLIIKVRAPGGNKSKIPGPGAQAAIRALSRAGLKIVRIEEVTPIPHDGTKKKGGKRGRRV.

This sequence belongs to the universal ribosomal protein uS11 family. Part of the 30S ribosomal subunit.

Functionally, located on the platform of the 30S subunit. The polypeptide is Small ribosomal subunit protein uS11 (Thermoplasma volcanium (strain ATCC 51530 / DSM 4299 / JCM 9571 / NBRC 15438 / GSS1)).